A 163-amino-acid polypeptide reads, in one-letter code: NADH-quinone oxidoreductase subunit I (163 aa).

2 4Fe-4S ferredoxin-type domains span residues 54 to 84 and 94 to 123; these read LRRYPNGEERCIACKLCEAVCPAQAITIDAE and TRYDIDMTKCIYCGFCQEACPVDAIVEGPN. [4Fe-4S] cluster is bound by residues cysteine 64, cysteine 67, cysteine 70, cysteine 74, cysteine 103, cysteine 106, cysteine 109, and cysteine 113.

Belongs to the complex I 23 kDa subunit family. As to quaternary structure, NDH-1 is composed of at least 14 different subunits, Nqo1 to Nqo14. The complex has a L-shaped structure, with the hydrophobic arm (subunits Nqo7, Nqo8, Nqo10 to Nqo14) embedded in the inner membrane and the hydrophilic peripheral arm (subunits Nqo1 to Nqo6, Nqo9) protruding into the bacterial cytoplasm. The hydrophilic domain contains all the redox centers. NADH-quinone oxidoreductase forms a supercomplex with ubiquinol-cytochrome c reductase complex (complex III or cytochrome b-c1 complex) and cytochrome c oxidase (complex IV), which stabilizes the NADH-quinone oxidoreductase complex. It depends on [4Fe-4S] cluster as a cofactor.

The protein localises to the cell inner membrane. It catalyses the reaction a quinone + NADH + 5 H(+)(in) = a quinol + NAD(+) + 4 H(+)(out). Functionally, NDH-1 shuttles electrons from NADH, via FMN and iron-sulfur (Fe-S) centers, to quinones in the respiratory chain. The immediate electron acceptor for the enzyme in this species is believed to be ubiquinone. Couples the redox reaction to proton translocation (for every two electrons transferred, four hydrogen ions are translocated across the cytoplasmic membrane), and thus conserves the redox energy in a proton gradient. This Paracoccus denitrificans (strain Pd 1222) protein is NADH-quinone oxidoreductase subunit I.